An 827-amino-acid polypeptide reads, in one-letter code: Disintegrin and metalloproteinase domain-containing protein 17 (827 aa).

Positions 1-17 (MRQRLLFLTTLVPFVLA) are cleaved as a signal peptide. The propeptide occupies 18–214 (PRPPEEPGSG…SEEFVRRVKR (197 aa)). A glycan (N-linked (GlcNAc...) asparagine) is linked at Asn157. Positions 182–189 (KVCGYLNA) match the Cysteine switch motif. Cys184 is a Zn(2+) binding site. At 215–671 (RAEPNPLKNT…NTFGKFLADN (457 aa)) the chain is on the extracellular side. A Peptidase M12B domain is found at 223 to 474 (NTCKLLVVAD…KAQECFQERS (252 aa)). Intrachain disulfides connect Cys225–Cys333, Cys365–Cys469, and Cys423–Cys453. Asn264 carries an N-linked (GlcNAc...) asparagine glycan. His405 is a binding site for Zn(2+). The active site involves Glu406. Zn(2+)-binding residues include His409 and His415. Residues Asn452, Asn498, Asn539, and Asn551 are each glycosylated (N-linked (GlcNAc...) asparagine). The Disintegrin domain occupies 475 to 563 (NKVCGNSRVD…ECPPPGDAED (89 aa)). 4 disulfides stabilise this stretch: Cys534/Cys555, Cys573/Cys582, Cys578/Cys591, and Cys593/Cys600. The crambin-like stretch occupies residues 603 to 671 (CCRNLSGPCV…NTFGKFLADN (69 aa)). The N-linked (GlcNAc...) asparagine glycan is linked to Asn606. A helical membrane pass occupies residues 672 to 692 (IVGSVLVFSLIFWIPFSILVH). Over 693 to 827 (CVDKKLDKQY…SRVDSKETEC (135 aa)) the chain is Cytoplasmic. The short motif at 731 to 738 (PAPQTPGR) is the SH3-binding element. A Phosphothreonine; by MAPK14 modification is found at Thr735. Thr764 is modified (phosphothreonine). A disordered region spans residues 766–827 (QEDPSTDSHV…SRVDSKETEC (62 aa)). Ser770 bears the Phosphoserine mark. 3 stretches are compositionally biased toward basic and acidic residues: residues 771-784 (TDSHVDDDGFEKDP), 794-810 (SFEDLTDHPVTRSEKAA), and 818-827 (SRVDSKETEC). Phosphoserine occurs at positions 794 and 822.

As to quaternary structure, interacts with MAD2L1, MAPK14 and MUC1. Interacts with iRhom1/RHBDF1 and iRhom2/RHBDF2. Interacts with FRMD8 via its interaction with iRhom1/RHBDF1 and iRhom2/RHBDF2. Interacts with TSPAN8. The cofactor is Zn(2+). In terms of processing, the precursor is cleaved by a furin endopeptidase. Phosphorylated. Stimulation by growth factor or phorbol 12-myristate 13-acetate induces phosphorylation of Ser-822 but decreases phosphorylation of Ser-794. Phosphorylation at Thr-735 by MAPK14 is required for ADAM17-mediated ectodomain shedding.

It is found in the membrane. The catalysed reaction is Narrow endopeptidase specificity. Cleaves Pro-Leu-Ala-Gln-Ala-|-Val-Arg-Ser-Ser-Ser in the membrane-bound, 26-kDa form of tumor necrosis factor alpha (TNFalpha). Similarly cleaves other membrane-anchored, cell-surface proteins to 'shed' the extracellular domains.. Functionally, transmembrane metalloprotease which mediates the ectodomain shedding of a myriad of transmembrane proteins including adhesion proteins, growth factor precursors and cytokines important for inflammation and immunity. Cleaves the membrane-bound precursor of TNF-alpha to its mature soluble form. Responsible for the proteolytical release of soluble JAM3 from endothelial cells surface. Responsible for the proteolytic release of several other cell-surface proteins, including p75 TNF-receptor, interleukin 1 receptor type II, p55 TNF-receptor, transforming growth factor-alpha, L-selectin, growth hormone receptor, MUC1 and the amyloid precursor protein. Acts as an activator of Notch pathway by mediating cleavage of Notch, generating the membrane-associated intermediate fragment called Notch extracellular truncation (NEXT). Plays a role in the proteolytic processing of ACE2. Plays a role in hemostasis through shedding of GP1BA, the platelet glycoprotein Ib alpha chain. Mediates the proteolytic cleavage of LAG3, leading to release the secreted form of LAG3. Mediates the proteolytic cleavage of IL6R, leading to the release of secreted form of IL6R. Mediates the proteolytic cleavage and shedding of FCGR3A upon NK cell stimulation, a mechanism that allows for increased NK cell motility and detachment from opsonized target cells. Cleaves TREM2, resulting in shedding of the TREM2 ectodomain. This Rattus norvegicus (Rat) protein is Disintegrin and metalloproteinase domain-containing protein 17 (Adam17).